The sequence spans 606 residues: Putative amino acid transporter AAT1 (606 aa).

Residues 1 to 156 (MNKKYGTSSN…DEEGTNKPKR (156 aa)) are disordered. Basic and acidic residues-rich tracts occupy residues 12 to 25 (HDNK…ADKN) and 72 to 89 (SDKK…ESSK). The span at 140 to 149 (SDGDYTNDEE) shows a compositional bias: acidic residues. Transmembrane regions (helical) follow at residues 175–194 (TVLF…PYVF), 200–225 (ILSI…TSSL), 246–271 (TIID…SNFL), 283–301 (LFTN…ILPI), 313–332 (FLIF…GLQT), 352–372 (HFFK…NACF), 393–412 (VILQ…FSFL), 428–449 (VSIL…PLNF), 522–539 (MWIS…ACKV), 545–567 (VIGI…LIYY), and 579–605 (RYST…LNLI).

This sequence belongs to the amino acid/polyamine transporter 2 family.

It localises to the vacuole membrane. In terms of biological role, putative amino acid transporter. Probably transports tryptophan. Involved in maintaining the osmotic homeostasis of the digestive vacuole. Important for the timely development and growth of the asexual-stage parasites and male gametocyte maturation. In Plasmodium falciparum (isolate 3D7), this protein is Putative amino acid transporter AAT1.